We begin with the raw amino-acid sequence, 294 residues long: Taste receptor type 2 member 143 (294 aa).

Residues 1 to 7 (MPSTPTL) lie on the Extracellular side of the membrane. A helical membrane pass occupies residues 8-28 (IFIVIFFLVSVASMLQNGFMI). Residues 29–43 (IVLGREWMRNRALPA) lie on the Cytoplasmic side of the membrane. Residues 44 to 64 (VDMIVASLASSRFCLHGIAIL) form a helical membrane-spanning segment. Residues 65–80 (NNFLASFDFCYQANFV) lie on the Extracellular side of the membrane. Residues 81-101 (GILWDFINTLILWLTAWLAIF) form a helical membrane-spanning segment. Topologically, residues 102-128 (YCVKISSFSHPVLFWLKWRISQLVPRL) are cytoplasmic. The chain crosses the membrane as a helical span at residues 129-149 (LLVSLIMGGLSAIISATGNII). Over 150-180 (ANQMIISQGFHGNCTFGHMSLDFYRYYYLSH) the chain is Extracellular. N162 carries an N-linked (GlcNAc...) asparagine glycan. A helical transmembrane segment spans residues 181 to 201 (AVLMWFTPFFLFLVSIIFLMF). The Cytoplasmic segment spans residues 202–227 (SLYRHVEKMRGHRPGPWDPRTQAHTM). A helical transmembrane segment spans residues 228 to 248 (ALKSLTVFITFYILFFLALII). Over 249 to 260 (SSTKSKTMHSYW) the chain is Extracellular. Residues 261–281 (YWVREIIIYTGIFLNSIILVL) traverse the membrane as a helical segment. Residues 282 to 294 (SNPKLRKALKMRF) are Cytoplasmic-facing.

Belongs to the G-protein coupled receptor T2R family.

Its subcellular location is the membrane. Functionally, putative taste receptor which may play a role in the perception of bitterness. The protein is Taste receptor type 2 member 143 of Rattus norvegicus (Rat).